Here is a 354-residue protein sequence, read N- to C-terminus: NADH-quinone oxidoreductase subunit H (354 aa).

Transmembrane regions (helical) follow at residues 22–42 (ILIR…YLIL), 91–111 (YLIA…VIPF), 124–144 (LLYV…AGWA), 168–188 (MGFA…SAIV), 203–223 (VLSW…ISGV), 255–275 (LFFL…ALLF), 291–311 (IPGF…FIWI), and 326–346 (LGWK…AIWI).

Belongs to the complex I subunit 1 family. As to quaternary structure, NDH-1 is composed of 14 different subunits. Subunits NuoA, H, J, K, L, M, N constitute the membrane sector of the complex.

The protein resides in the cell inner membrane. It catalyses the reaction a quinone + NADH + 5 H(+)(in) = a quinol + NAD(+) + 4 H(+)(out). NDH-1 shuttles electrons from NADH, via FMN and iron-sulfur (Fe-S) centers, to quinones in the respiratory chain. The immediate electron acceptor for the enzyme in this species is believed to be ubiquinone. Couples the redox reaction to proton translocation (for every two electrons transferred, four hydrogen ions are translocated across the cytoplasmic membrane), and thus conserves the redox energy in a proton gradient. This subunit may bind ubiquinone. This chain is NADH-quinone oxidoreductase subunit H, found in Cupriavidus pinatubonensis (strain JMP 134 / LMG 1197) (Cupriavidus necator (strain JMP 134)).